We begin with the raw amino-acid sequence, 1065 residues long: Leucine-rich repeats and immunoglobulin-like domains protein 2 (1065 aa).

An N-terminal signal peptide occupies residues 1 to 40 (MAPAPLGVPEEQLLGCRSRVLSRLLFIAQTALLLLPAAGA). The region spanning 41 to 75 (GLCPAPCSCRIPLLDCSRRKLPAPSWRALSGLLPP) is the LRRNT domain. The Extracellular segment spans residues 41–807 (GLCPAPCSCR…HEDDGWTTVG (767 aa)). 15 LRR repeats span residues 76 to 97 (DTAILDFSHNRLSNWNISLESQ), 98 to 119 (TLQEVKMNYNELTEIPYFGEPT), 121 to 142 (NITLLSLVHNIIPEINAQALQF), 145 to 166 (ALESLDLSSNIISEIKTSSFPR), 168 to 189 (QLKYLNLSNNRITTLEAGCFDN), 193 to 214 (SLLVVKLNRNRMSMIPPKIFKL), 216 to 237 (HLQFLELKRNRIKIVEGLTFQG), 240 to 261 (SLRSLKMQRNGISKLKDGAFFG), 264 to 285 (NMEELELEHNNLTRVNKGWLYG), 288 to 309 (MLQQLYVSQNAIERISPDAWEF), 312 to 333 (RLSELDLSYNQLTRLDESAFVG), 336 to 357 (LLERLNLGDNRVTHIADGVFRF), 360 to 382 (NLQTLDLRNNEISWAIEDASEAF), 387 to 408 (SLTKLILQGNQIKSITKKAFIG), and 411 to 432 (SLEHLDLNNNAIMSIQENAFSQ). A glycan (N-linked (GlcNAc...) asparagine) is linked at Asn-91. An N-linked (GlcNAc...) asparagine glycan is attached at Asn-121. Residues Asn-173 and Asn-189 are each glycosylated (N-linked (GlcNAc...) asparagine). Residue Asn-274 is glycosylated (N-linked (GlcNAc...) asparagine). Residues Asn-441, Asn-468, Asn-514, Asn-571, and Asn-589 are each glycosylated (N-linked (GlcNAc...) asparagine). Residues 443–494 (SSLLCDCHLKWLLQWLVDNNFQHSVNVSCAHPEWLAGQSILNVDLKDFVCDD) form the LRRCT domain. Ig-like C2-type domains are found at residues 498–597 (PQIR…AKLT), 602–691 (PSFL…ASLT), and 696–785 (PSFI…NVIS). Cys-519 and Cys-580 form a disulfide bridge. Cys-623 and Cys-675 form a disulfide bridge. 2 N-linked (GlcNAc...) asparagine glycosylation sites follow: Asn-687 and Asn-728. Cys-717 and Cys-766 are oxidised to a cystine. Residues 808-828 (IVIIVVVCCVVGTSLIWVIVI) traverse the membrane as a helical segment. Topologically, residues 829-1065 (YHMRRKNEDY…RNIQDGSEGT (237 aa)) are cytoplasmic. Tyr-906 carries the phosphotyrosine modification. Disordered stretches follow at residues 963 to 990 (SANREPSAFPTNHERISEKKLPSTQMSG) and 1003 to 1040 (ELGLPHPPFSQQPVHESPQLHQNEGLAGREPDCSASSM). The span at 974 to 983 (NHERISEKKL) shows a compositional bias: basic and acidic residues. Residues 1013–1024 (QQPVHESPQLHQ) show a composition bias toward polar residues.

Detected in all tissues analyzed.

The protein localises to the cell membrane. It localises to the cytoplasm. The sequence is that of Leucine-rich repeats and immunoglobulin-like domains protein 2 (LRIG2) from Homo sapiens (Human).